A 563-amino-acid polypeptide reads, in one-letter code: Src substrate protein p85 (563 aa).

Cortactin repeat units lie at residues 89-125, 126-162, 163-199, 200-236, 237-273, and 274-310; these read ASHG…SQVD, SVKG…SQKD, YSSG…SQKD, YSKG…SQKD, YVKG…SQKD, and YKSG…SQQD. The stretch at 311 to 333 is one Cortactin 7; truncated repeat; it reads YSKGFGGKYGVQKDRMDKNAATF. The disordered stretch occupies residues 331-477; that stretch reads ATFEDIEKPT…EAVSQREAEY (147 aa). Positions 349–410 form a coiled coil; the sequence is VERVANKTSS…EEQAKAKKQT (62 aa). The span at 366 to 405 shows a compositional bias: basic and acidic residues; that stretch reads LAKEKEQEDRRKAEAERAQRMAREKQEQEEARRKLEEQAK. Residues 505 to 563 enclose the SH3 domain; it reads ELGITAIALYDYQAAGDDEISFDPDDIITNIEMIDDGWWRGVCKGRYGLFPANYVELRQ.

Post-translationally, acetylated. In normal cells, appears to be phosphorylated on serine and threonine; in cells expressing activated forms of pp60-src, they become heavily phosphorylated on tyrosine in vitro. Tyrosine phosphorylation in transformed cells may contribute to cellular growth regulation and transformation.

The protein localises to the cytoplasm. It localises to the cytoskeleton. The protein resides in the cell projection. It is found in the lamellipodium. Its subcellular location is the ruffle. The protein localises to the dendrite. It localises to the cell membrane. The protein resides in the podosome. It is found in the cell junction. Its subcellular location is the focal adhesion. The protein localises to the membrane. It localises to the clathrin-coated pit. The protein resides in the dendritic spine. It is found in the cell cortex. Its subcellular location is the endoplasmic reticulum. Contributes to the organization of the actin cytoskeleton and cell shape. Plays a role in the formation of lamellipodia and in cell migration. Plays a role in the regulation of neuron morphology, axon growth and formation of neuronal growth cones, and may play a role in the regulation of neuronal spine density. Plays a role in focal adhesion assembly and turnover. Plays a role in intracellular protein transport and endocytosis, and in modulating the levels of potassium channels present at the cell membrane. Plays a role in endocytosis via clathrin-coated pits. This chain is Src substrate protein p85 (CTTN1), found in Gallus gallus (Chicken).